The chain runs to 354 residues: NADH-quinone oxidoreductase subunit H (354 aa).

Transmembrane regions (helical) follow at residues 25-45 (LVRI…LILW), 91-111 (WIYM…WAVI), 126-146 (LLYA…AGWA), 170-190 (MGFA…SGIV), 205-225 (FLSW…ISGI), 267-287 (IVIS…PFGF), 290-310 (FIPG…VFIW), and 330-350 (IFIP…MSPL).

It belongs to the complex I subunit 1 family. In terms of assembly, NDH-1 is composed of 14 different subunits. Subunits NuoA, H, J, K, L, M, N constitute the membrane sector of the complex.

The protein localises to the cell inner membrane. It carries out the reaction a quinone + NADH + 5 H(+)(in) = a quinol + NAD(+) + 4 H(+)(out). Functionally, NDH-1 shuttles electrons from NADH, via FMN and iron-sulfur (Fe-S) centers, to quinones in the respiratory chain. The immediate electron acceptor for the enzyme in this species is believed to be ubiquinone. Couples the redox reaction to proton translocation (for every two electrons transferred, four hydrogen ions are translocated across the cytoplasmic membrane), and thus conserves the redox energy in a proton gradient. This subunit may bind ubiquinone. This Paraburkholderia xenovorans (strain LB400) protein is NADH-quinone oxidoreductase subunit H.